The primary structure comprises 316 residues: Ornithine carbamoyltransferase (316 aa).

Carbamoyl phosphate-binding positions include 59 to 62 (STRT), glutamine 86, arginine 110, and 137 to 140 (HPCQ). L-ornithine contacts are provided by residues asparagine 168, aspartate 232, and 236–237 (SM). Carbamoyl phosphate-binding positions include 273–274 (CL) and arginine 301.

This sequence belongs to the aspartate/ornithine carbamoyltransferase superfamily. OTCase family.

It localises to the cytoplasm. The catalysed reaction is carbamoyl phosphate + L-ornithine = L-citrulline + phosphate + H(+). The protein operates within amino-acid degradation; L-arginine degradation via ADI pathway; carbamoyl phosphate from L-arginine: step 2/2. Its function is as follows. Reversibly catalyzes the transfer of the carbamoyl group from carbamoyl phosphate (CP) to the N(epsilon) atom of ornithine (ORN) to produce L-citrulline. The chain is Ornithine carbamoyltransferase from Listeria monocytogenes serotype 4a (strain HCC23).